We begin with the raw amino-acid sequence, 237 residues long: Lipoprotein-releasing system ATP-binding protein LolD (237 aa).

The region spanning 16 to 237 is the ABC transporter domain; sequence LKCEGLTRIY…LDQGRLSEDA (222 aa). 52 to 59 serves as a coordination point for ATP; it reads GSSGSGKT.

This sequence belongs to the ABC transporter superfamily. Lipoprotein translocase (TC 3.A.1.125) family. In terms of assembly, the complex is composed of two ATP-binding proteins (LolD) and two transmembrane proteins (LolC and LolE).

It localises to the cell inner membrane. Its function is as follows. Part of the ABC transporter complex LolCDE involved in the translocation of mature outer membrane-directed lipoproteins, from the inner membrane to the periplasmic chaperone, LolA. Responsible for the formation of the LolA-lipoprotein complex in an ATP-dependent manner. The protein is Lipoprotein-releasing system ATP-binding protein LolD of Chromohalobacter salexigens (strain ATCC BAA-138 / DSM 3043 / CIP 106854 / NCIMB 13768 / 1H11).